The primary structure comprises 711 residues: Zinc finger protein 175 (711 aa).

Over residues 1–11 (MPADVNLSQKP) the composition is skewed to polar residues. The disordered stretch occupies residues 1 to 21 (MPADVNLSQKPQVLGPEKQDG). The KRAB domain maps to 27–98 (VSFEDVTVDF…EAEVSHQRCQ (72 aa)). The segment at 279–301 (DGCSECGGSFTQKSHLFAQQRIH) adopts a C2H2-type 1; atypical zinc-finger fold. A C2H2-type 2; atypical zinc finger spans residues 307–329 (HECGKCGKAFMPQLKLSVYLTDH). A C2H2-type 3 zinc finger spans residues 335–357 (CICKECGKVFIQRSELLTHQKTH). Positions 359 to 362 (RKKP) match the Nuclear localization signal motif. 12 consecutive C2H2-type zinc fingers follow at residues 363–385 (YKCH…QRTH), 391–413 (YECS…QKIH), 419–441 (YACS…QRIH), 447–469 (YVCI…QRSH), 475–497 (YQCH…HRIH), 503–525 (YECS…QKIH), 531–553 (HVCS…QRIH), 559–581 (YKCS…QRIH), 587–609 (YVCT…QITH), 615–637 (FVCY…QRTH), 643–665 (YECL…QRIH), and 671–693 (YVCS…QTTH).

This sequence belongs to the krueppel C2H2-type zinc-finger protein family. As to expression, ubiquitous.

Its subcellular location is the cytoplasm. The protein resides in the nucleus. Its function is as follows. Down-regulates the expression of several chemokine receptors. Interferes with HIV-1 replication by suppressing Tat-induced viral LTR promoter activity. The polypeptide is Zinc finger protein 175 (ZNF175) (Homo sapiens (Human)).